A 784-amino-acid polypeptide reads, in one-letter code: Ubiquitin carboxyl-terminal hydrolase 1 (784 aa).

2 disordered regions span residues 1-21 and 33-54; these read MPGVIPSESNGLSRGSPSKKN and TKRALDFTDSQEDEEKASEYRG. The segment covering 7 to 16 has biased composition (polar residues); the sequence is SESNGLSRGS. A phosphoserine mark is found at Ser16, Ser42, and Ser67. Positions 81 to 784 constitute a USP domain; that stretch reads VGLNNLGNTC…TPYLLFYKKL (704 aa). Cys90 (nucleophile) is an active-site residue. 2 stretches are compositionally biased toward basic and acidic residues: residues 232-243 and 252-264; these read KVEEKSLQKEET and DSTRNLDDLKEQL. Disordered regions lie at residues 232–341 and 363–411; these read KVEE…KINW and TNQR…SSEA. Over residues 389 to 407 the composition is skewed to polar residues; it reads NTVNGSGPASPGSSVTPVD. Phosphoserine is present on Ser475. The active-site Proton acceptor is the His593. The interval 686–723 is disordered; that stretch reads PEKVVGTPFTDSRNSETNDTNGTQESDRSKESSDQTGI. Residues 694-709 are compositionally biased toward polar residues; it reads FTDSRNSETNDTNGTQ. Ser767 bears the Phosphoserine mark.

Belongs to the peptidase C19 family. As to quaternary structure, interacts with FANCD2 and PCNA. Interacts with WDR48. Interacts with ATAD5; the interaction regulates USP1-mediated PCNA deubiquitination. Autocatalytic cleavage of USP1 following UV irradiation inactivates it, leading to an increase in ubiquitinated PCNA, recruitment of POLH and translesion synthesis. Post-translationally, ubiquitinated by the CRL2(KLHDC2) complex following autocatalytic cleavage, leading to its degradation: the CRL2(KLHDC2) complex recognizes the diglycine (Gly-Gly) at the C-terminus.

The protein localises to the nucleus. It carries out the reaction Thiol-dependent hydrolysis of ester, thioester, amide, peptide and isopeptide bonds formed by the C-terminal Gly of ubiquitin (a 76-residue protein attached to proteins as an intracellular targeting signal).. In terms of biological role, negative regulator of DNA damage repair which specifically deubiquitinates monoubiquitinated FANCD2. Also involved in PCNA-mediated translesion synthesis (TLS) by deubiquitinating monoubiquitinated PCNA. Has almost no deubiquitinating activity by itself and requires the interaction with WDR48 to have a high activity. In Rattus norvegicus (Rat), this protein is Ubiquitin carboxyl-terminal hydrolase 1.